The chain runs to 356 residues: Xylose/arabinose import permease protein XylH (356 aa).

The next 10 helical transmembrane spans lie at 14–34 (LFLV…AYFS), 41–61 (IFQY…LMLC), 70–90 (ALAN…YQAI), 96–116 (IVVS…MNGL), 126–146 (LITT…YSGG), 161–181 (VSIL…LILL), 211–231 (VKII…IIQG), 242–262 (FTAD…TSLV), 266–286 (GSLV…NGFN), and 287–307 (ILGI…VVVM).

This sequence belongs to the binding-protein-dependent transport system permease family. In terms of assembly, the complex is composed of two ATP-binding proteins (XylG), two transmembrane proteins (XylH) and a solute-binding protein (XylF).

The protein resides in the cell membrane. Part of the ABC transporter complex XylFGH involved in the uptake of xylose and arabinose. Responsible for the translocation of the substrate across the membrane. The polypeptide is Xylose/arabinose import permease protein XylH (Sulfolobus acidocaldarius (strain ATCC 33909 / DSM 639 / JCM 8929 / NBRC 15157 / NCIMB 11770)).